The sequence spans 209 residues: A-type ATP synthase subunit D (209 aa).

The protein belongs to the V-ATPase D subunit family. In terms of assembly, has multiple subunits with at least A(3), B(3), C, D, E, F, H, I and proteolipid K(x).

The protein localises to the cell membrane. Functionally, component of the A-type ATP synthase that produces ATP from ADP in the presence of a proton gradient across the membrane. The sequence is that of A-type ATP synthase subunit D from Methanoregula boonei (strain DSM 21154 / JCM 14090 / 6A8).